A 498-amino-acid polypeptide reads, in one-letter code: ATP synthase subunit beta, chloroplastic (498 aa).

172 to 179 is a binding site for ATP; it reads GGAGVGKT.

Belongs to the ATPase alpha/beta chains family. As to quaternary structure, F-type ATPases have 2 components, CF(1) - the catalytic core - and CF(0) - the membrane proton channel. CF(1) has five subunits: alpha(3), beta(3), gamma(1), delta(1), epsilon(1). CF(0) has four main subunits: a(1), b(1), b'(1) and c(9-12).

It is found in the plastid. Its subcellular location is the chloroplast thylakoid membrane. It carries out the reaction ATP + H2O + 4 H(+)(in) = ADP + phosphate + 5 H(+)(out). Its function is as follows. Produces ATP from ADP in the presence of a proton gradient across the membrane. The catalytic sites are hosted primarily by the beta subunits. In Morus indica (Mulberry), this protein is ATP synthase subunit beta, chloroplastic.